Reading from the N-terminus, the 604-residue chain is Elongation factor 4 (604 aa).

Residues 7–189 (SRIRNFSIIA…SIVHLVPPPD (183 aa)) form the tr-type G domain. GTP contacts are provided by residues 19–24 (DHGKST) and 136–139 (NKID).

The protein belongs to the TRAFAC class translation factor GTPase superfamily. Classic translation factor GTPase family. LepA subfamily.

It localises to the cell inner membrane. It catalyses the reaction GTP + H2O = GDP + phosphate + H(+). Required for accurate and efficient protein synthesis under certain stress conditions. May act as a fidelity factor of the translation reaction, by catalyzing a one-codon backward translocation of tRNAs on improperly translocated ribosomes. Back-translocation proceeds from a post-translocation (POST) complex to a pre-translocation (PRE) complex, thus giving elongation factor G a second chance to translocate the tRNAs correctly. Binds to ribosomes in a GTP-dependent manner. This Gloeothece citriformis (strain PCC 7424) (Cyanothece sp. (strain PCC 7424)) protein is Elongation factor 4.